We begin with the raw amino-acid sequence, 211 residues long: Ribonuclease P protein component 3 (211 aa).

Belongs to the eukaryotic/archaeal RNase P protein component 3 family. As to quaternary structure, consists of a catalytic RNA component and at least 4-5 protein subunits.

It is found in the cytoplasm. It carries out the reaction Endonucleolytic cleavage of RNA, removing 5'-extranucleotides from tRNA precursor.. In terms of biological role, part of ribonuclease P, a protein complex that generates mature tRNA molecules by cleaving their 5'-ends. This chain is Ribonuclease P protein component 3, found in Aeropyrum pernix (strain ATCC 700893 / DSM 11879 / JCM 9820 / NBRC 100138 / K1).